The primary structure comprises 404 residues: Cytochrome b561 and DOMON domain-containing protein At5g35735 (404 aa).

Residues 1-25 (MDRTQSPKTALFAVLATLLVLTVNG) form the signal peptide. A DOMON domain is found at 49 to 164 (LGSFLHWTYN…ITANQLWQVG (116 aa)). The 200-residue stretch at 170 to 369 (VPASHQTSGD…LEPLTWFIVL (200 aa)) folds into the Cytochrome b561 domain. A disordered region spans residues 172-207 (ASHQTSGDNMRSSGRIDFRTGQASAGGGGSGDRLRK). Residues 173 to 183 (SHQTSGDNMRS) are compositionally biased toward polar residues. The next 2 membrane-spanning stretches (helical) occupy residues 210 to 230 (THGV…AMMA) and 241 to 261 (WFYL…AGWA). Positions 211, 245, and 278 each coordinate heme b. A helical membrane pass occupies residues 280 to 300 (NLGIALFTFATLQVFALLVRP). Position 314 (H314) interacts with heme b. The next 2 membrane-spanning stretches (helical) occupy residues 316–336 (TVGY…FDIL) and 349–369 (ILIF…FIVL). A disordered region spans residues 376–404 (GNTVAAPTSSKYSNGVNGTTTTGPHHQDA). Residues 380–404 (AAPTSSKYSNGVNGTTTTGPHHQDA) show a composition bias toward polar residues.

The cofactor is heme b.

The protein localises to the membrane. Its function is as follows. May act as a catecholamine-responsive trans-membrane electron transporter. This is Cytochrome b561 and DOMON domain-containing protein At5g35735 from Arabidopsis thaliana (Mouse-ear cress).